A 162-amino-acid polypeptide reads, in one-letter code: Protein snakeskin (162 aa).

Residues 2 to 6 (VSVET) lie on the Cytoplasmic side of the membrane. A helical membrane pass occupies residues 7–27 (VGSIFIKALKLIINLVIIFLY). The Extracellular portion of the chain corresponds to 28-53 (RWGDGGEFLGIGGTWNLNEEKSADAE). The helical transmembrane segment at 54 to 74 (IVASGVMVGFLIYTGCHTIAF) threads the bilayer. The Cytoplasmic segment spans residues 75-88 (AFGTTKHKGELCDT). The chain crosses the membrane as a helical span at residues 89–109 (IMNVVGCIMWIAVGGVALHYW). The Extracellular portion of the chain corresponds to 110-128 (KGYMSDEGFLYVNSERQVG). The chain crosses the membrane as a helical span at residues 129 to 149 (IAMGSLCVIEGALYLLDTVLA). Residues 150–162 (CIHYSKGDTDYTQ) lie on the Cytoplasmic side of the membrane.

As to quaternary structure, forms a complex with Tsp2A and mesh. Interacts with mesh; the interaction may be necessary for the localization of both proteins to the cell apicolateral region.

It is found in the apicolateral cell membrane. The protein resides in the cell junction. Its subcellular location is the septate junction. Functionally, required for assembly of smooth septate junctions (sSJs), together with mesh and Tsp2A. May be important for barrier function of the midgut epithelium. In Drosophila melanogaster (Fruit fly), this protein is Protein snakeskin.